A 417-amino-acid polypeptide reads, in one-letter code: Serine hydroxymethyltransferase (417 aa).

Residues Leu-121 and 125–127 (GHL) each bind (6S)-5,6,7,8-tetrahydrofolate. At Lys-229 the chain carries N6-(pyridoxal phosphate)lysine. Residue 355–357 (SPF) coordinates (6S)-5,6,7,8-tetrahydrofolate.

This sequence belongs to the SHMT family. Homodimer. Pyridoxal 5'-phosphate serves as cofactor.

Its subcellular location is the cytoplasm. It catalyses the reaction (6R)-5,10-methylene-5,6,7,8-tetrahydrofolate + glycine + H2O = (6S)-5,6,7,8-tetrahydrofolate + L-serine. It participates in one-carbon metabolism; tetrahydrofolate interconversion. It functions in the pathway amino-acid biosynthesis; glycine biosynthesis; glycine from L-serine: step 1/1. In terms of biological role, catalyzes the reversible interconversion of serine and glycine with tetrahydrofolate (THF) serving as the one-carbon carrier. This reaction serves as the major source of one-carbon groups required for the biosynthesis of purines, thymidylate, methionine, and other important biomolecules. Also exhibits THF-independent aldolase activity toward beta-hydroxyamino acids, producing glycine and aldehydes, via a retro-aldol mechanism. This chain is Serine hydroxymethyltransferase, found in Buchnera aphidicola subsp. Acyrthosiphon pisum (strain APS) (Acyrthosiphon pisum symbiotic bacterium).